We begin with the raw amino-acid sequence, 640 residues long: Calpain-5 (640 aa).

In terms of domain architecture, Calpain catalytic spans 26 to 343 (LFEDPHFPAS…FTDIIKCRLI (318 aa)). Catalysis depends on residues C81, H252, and N284. Residues 344-496 (NTSYLSIHKT…VFTDVPSNCR (153 aa)) form a domain III region. The region spanning 499–617 (RLDEPPRTCW…HSLHLQDRSG (119 aa)) is the C2 domain.

Belongs to the peptidase C2 family.

Functionally, calcium-regulated non-lysosomal thiol-protease. In Rattus norvegicus (Rat), this protein is Calpain-5 (Capn5).